The primary structure comprises 287 residues: MSLLIALVPMIAWGSIGLVSGKIGGSANQQTLGMTIGALLFSIVVFFVIQPTLTTATLIVGFISGLFWSLGQNQQFHSMKYMGVSVGLPISTGMQLVVNTVAGAVFFHEWTKTKDFVVGFIALAFLVFGVYLTARQDDDSQPKTSNSMLDFNKGIRALIFSTVGYGVYTIIINATGLDPWGIILPQSIGMLVGASFFAFKKVKVDRFVWMNMTTGLLWGLGNICMLLTMREIGLAISFSLSQMGIIISTLGGIFLLGERKSKKEMFYVIFGCIFVILGGILLGYMKA.

10 helical membrane passes run 5-27 (IALVPMIAWGSIGLVSGKIGGSA), 32-49 (LGMTIGALLFSIVVFFVI), 53-71 (LTTATLIVGFISGLFWSLG), 84-106 (VSVGLPISTGMQLVVNTVAGAVF), 116-134 (FVVGFIALAFLVFGVYLTA), 155-177 (IRALIFSTVGYGVYTIIINATGL), 182-200 (IILPQSIGMLVGASFFAFK), 207-229 (FVWMNMTTGLLWGLGNICMLLTM), 234-256 (LAISFSLSQMGIIISTLGGIFLL), and 265-284 (MFYVIFGCIFVILGGILLGY).

The protein belongs to the GRP transporter (TC 2.A.7.5) family.

It is found in the cell membrane. The sequence is that of Putative sugar uptake protein EF_0928 from Enterococcus faecalis (strain ATCC 700802 / V583).